The primary structure comprises 344 residues: UDP-3-O-acylglucosamine N-acyltransferase (344 aa).

H244 (proton acceptor) is an active-site residue.

Belongs to the transferase hexapeptide repeat family. LpxD subfamily. As to quaternary structure, homotrimer.

The enzyme catalyses a UDP-3-O-[(3R)-3-hydroxyacyl]-alpha-D-glucosamine + a (3R)-hydroxyacyl-[ACP] = a UDP-2-N,3-O-bis[(3R)-3-hydroxyacyl]-alpha-D-glucosamine + holo-[ACP] + H(+). The protein operates within bacterial outer membrane biogenesis; LPS lipid A biosynthesis. Its function is as follows. Catalyzes the N-acylation of UDP-3-O-acylglucosamine using 3-hydroxyacyl-ACP as the acyl donor. Is involved in the biosynthesis of lipid A, a phosphorylated glycolipid that anchors the lipopolysaccharide to the outer membrane of the cell. The polypeptide is UDP-3-O-acylglucosamine N-acyltransferase (Pseudoalteromonas atlantica (strain T6c / ATCC BAA-1087)).